The following is a 1481-amino-acid chain: Cystic fibrosis transmembrane conductance regulator (1481 aa).

Topologically, residues 1 to 77 (MQRSPLEKAS…KLINALRRCF (77 aa)) are cytoplasmic. The chain crosses the membrane as a helical span at residues 78 to 98 (FWRFMFYGIILYLGEVTKAVQ). Residues 81–365 (FMFYGIILYL…WAVQTWYDSL (285 aa)) form the ABC transmembrane type-1 1 domain. At 99 to 122 (PLLLGRIIASYDPDNKAERSIAIY) the chain is on the extracellular side. The chain crosses the membrane as a helical span at residues 123 to 146 (LGIGLCLLFIVRTLLLHPAIFGLH). Topologically, residues 147-195 (HIGMQMRIAMFSLIYKKTLKLSSRVLDKISIGQLVSLLSNNLNKFDEGL) are cytoplasmic. A helical transmembrane segment spans residues 196–216 (ALAHFVWIAPLQVTLLMGLLW). Over 217 to 222 (ELLQAF) the chain is Extracellular. The chain crosses the membrane as a helical span at residues 223–243 (TFCGLAFLVVLAFLQAGLGKM). Over 244–298 (MMKYRDQRAGKINERLVITSEIIENIQSVKAYCWEEAMEKIIENLRQTELKLTRK) the chain is Cytoplasmic. The helical transmembrane segment at 299–319 (AAYVRYLNSSAFFFSGFFVVF) threads the bilayer. Over 320–339 (LSVLPYALLKGIILRKIFTT) the chain is Extracellular. The helical transmembrane segment at 340–358 (ISFCIVLRMAVTRQFPWAV) threads the bilayer. Residues 359 to 858 (QTWYDSLGAI…YLRYITVHKS (500 aa)) lie on the Cytoplasmic side of the membrane. Residues Trp401, 457–464 (GSTGAGKT), and Gln492 contribute to the ATP site. The ABC transporter 1 domain maps to 423-645 (NGDNNLFFSN…RPDFSSKLMG (223 aa)). A lipid anchor (S-palmitoyl cysteine) is attached at Cys523. A phosphoserine mark is found at Ser548 and Ser659. Residues 653 to 831 (TAERRNSIIT…EEINEEDLRD (179 aa)) form a disordered R region region. The residue at position 669 (Ser669) is a Phosphoserine; by PKA. A Phosphoserine modification is found at Ser685. Residue Lys687 forms a Glycyl lysine isopeptide (Lys-Gly) (interchain with G-Cter in ubiquitin) linkage. Residues Ser699 and Ser711 each carry the phosphoserine modification. Residue Thr716 is modified to Phosphothreonine. Ser736, Ser767, Ser790, Ser795, and Ser813 each carry phosphoserine. A helical membrane pass occupies residues 859–879 (LMFVLIWCLVVFLAEVAASLV). Positions 859–1155 (LMFVLIWCLV…AVNSSIDVDS (297 aa)) constitute an ABC transmembrane type-1 2 domain. At 880–918 (VLCLFPKILFQDKGNSTKSANNSYAVIITSTSSYYIFYI) the chain is on the extracellular side. 2 N-linked (GlcNAc...) asparagine glycosylation sites follow: Asn894 and Asn900. A discontinuously helical transmembrane segment spans residues 919 to 939 (YVGVADTLLALGLFRGLPLVH). The Cytoplasmic segment spans residues 940-990 (TLITVSKTLHHKMLQSVLQAPMSTLNTLKTGGILNRFSKDIAVLDDLLPLT). A helical transmembrane segment spans residues 991 to 1011 (IFDFVQLLLIVIGAVVVVSVL). The Extracellular portion of the chain corresponds to 1012-1013 (QP). The chain crosses the membrane as a helical span at residues 1014-1034 (YIFLATVPVIAAFILLRAYFL). The Cytoplasmic portion of the chain corresponds to 1035–1095 (HTSQQLKQLE…TANWFLYLST (61 aa)). A helical transmembrane segment spans residues 1096–1116 (LRWFQMRIEMIFVIFFIAVTF). Over 1117 to 1130 (ISILTTGEGEGRVG) the chain is Extracellular. A helical transmembrane segment spans residues 1131-1151 (IILTLAMNIMGTLQWAVNSSI). Topologically, residues 1152 to 1481 (DVDSLMRSVS…TEEEVQETKI (330 aa)) are cytoplasmic. One can recognise an ABC transporter 2 domain in the interval 1211-1444 (MTVKDLTAKY…KSLFRQAISP (234 aa)). ATP contacts are provided by residues Tyr1220 and 1245–1252 (GRTGSGKS). Residues 1387-1481 (RTLKQAFADC…TEEEVQETKI (95 aa)) form an interaction with GORASP2 region. A lipid anchor (S-palmitoyl cysteine) is attached at Cys1396. A disordered region spans residues 1452–1481 (PQRNSSRQKSRSNIAALKEETEEEVQETKI). Residues 1453–1464 (QRNSSRQKSRSN) show a composition bias toward low complexity. Phosphoserine is present on Ser1457. The segment covering 1471-1481 (ETEEEVQETKI) has biased composition (acidic residues). A PDZ-binding motif is present at residues 1479 to 1481 (TKI).

This sequence belongs to the ABC transporter superfamily. ABCC family. CFTR transporter (TC 3.A.1.202) subfamily. As to quaternary structure, monomer; does not require oligomerization for channel activity. May form oligomers in the membrane. Interacts with SLC26A3, SLC26A6 and NHERF1. Interacts with SHANK2. Interacts with MYO6. Interacts (via C-terminus) with GOPC (via PDZ domain); this promotes CFTR internalization and thereby decreases channel activity. Interacts with SLC4A7 through NHERF1. Found in a complex with MYO5B and RAB11A. Interacts with ANO1. Interacts with SLC26A8. Interacts with AHCYL1; the interaction increases CFTR activity. Interacts with CSE1L. The core-glycosylated form interacts with GORASP2 (via PDZ GRASP-type 1 domain) in respone to ER stress. Interacts with MARCHF2; the interaction leads to CFTR ubiqtuitination and degradation. Interacts with ADGRG2. N-glycosylated. In terms of processing, phosphorylated; cAMP treatment promotes phosphorylation and activates the channel. Dephosphorylation decreases the ATPase activity (in vitro). Phosphorylation at PKA sites activates the channel. Phosphorylation at PKC sites enhances the response to phosphorylation by PKA. Phosphorylated by AMPK; this inhibits channel activity. Post-translationally, ubiquitinated, leading to its degradation in the lysosome. Deubiquitination by USP10 in early endosomes enhances its endocytic recycling to the cell membrane. Ubiquitinated by RNF185 during ER stress. Ubiquitinated by MARCHF2.

Its subcellular location is the apical cell membrane. The protein localises to the early endosome membrane. It is found in the cell membrane. The protein resides in the recycling endosome membrane. It localises to the endoplasmic reticulum membrane. Its subcellular location is the nucleus. The enzyme catalyses ATP + H2O + closed Cl(-) channel = ADP + phosphate + open Cl(-) channel.. The catalysed reaction is chloride(in) = chloride(out). It catalyses the reaction hydrogencarbonate(in) = hydrogencarbonate(out). It carries out the reaction ATP + H2O = ADP + phosphate + H(+). Functionally, epithelial ion channel that plays an important role in the regulation of epithelial ion and water transport and fluid homeostasis. Mediates the transport of chloride ions across the cell membrane. Possesses an intrinsic ATPase activity and utilizes ATP to gate its channel; the passive flow of anions through the channel is gated by cycles of ATP binding and hydrolysis by the ATP-binding domains. The ion channel is also permeable to HCO(3)(-); selectivity depends on the extracellular chloride concentration. Exerts its function also by modulating the activity of other ion channels and transporters. Contributes to the regulation of the pH and the ion content of the epithelial fluid layer. Modulates the activity of the epithelial sodium channel (ENaC) complex, in part by regulating the cell surface expression of the ENaC complex. May regulate bicarbonate secretion and salvage in epithelial cells by regulating the transporter SLC4A7. Can inhibit the chloride channel activity of ANO1. Plays a role in the chloride and bicarbonate homeostasis during sperm epididymal maturation and capacitation. The protein is Cystic fibrosis transmembrane conductance regulator of Muntiacus reevesi (Reeves' muntjac).